The primary structure comprises 264 residues: Phosphate import ATP-binding protein PstB (264 aa).

The region spanning 11 to 250 (LKAEALSVYY…DTTEKIFDSP (240 aa)) is the ABC transporter domain. ATP is bound at residue 43–50 (GPSGCGKS).

This sequence belongs to the ABC transporter superfamily. Phosphate importer (TC 3.A.1.7) family. As to quaternary structure, the complex is composed of two ATP-binding proteins (PstB), two transmembrane proteins (PstC and PstA) and a solute-binding protein (PstS).

It localises to the cell inner membrane. The catalysed reaction is phosphate(out) + ATP + H2O = ADP + 2 phosphate(in) + H(+). Functionally, part of the ABC transporter complex PstSACB involved in phosphate import. Responsible for energy coupling to the transport system. In Synechococcus sp. (strain ATCC 27144 / PCC 6301 / SAUG 1402/1) (Anacystis nidulans), this protein is Phosphate import ATP-binding protein PstB.